A 473-amino-acid polypeptide reads, in one-letter code: Cucurbitadienol 11-hydroxylase (473 aa).

A helical transmembrane segment spans residues 4–24 (VVLGLATLFVAYYIHWINKWR). Cysteine 422 serves as a coordination point for heme.

The protein belongs to the cytochrome P450 family. It depends on heme as a cofactor. Highly expressed in young fruits 15 days after anthesis (15-DAA). Also observed in roots.

The protein localises to the membrane. It catalyses the reaction cucurbitadienol + 2 reduced [NADPH--hemoprotein reductase] + 2 O2 = 11-oxocucurbitadienol + 2 oxidized [NADPH--hemoprotein reductase] + 3 H2O + 2 H(+). The catalysed reaction is cucurbitadienol + reduced [NADPH--hemoprotein reductase] + O2 = 11-hydroxycucurbitadienol + oxidized [NADPH--hemoprotein reductase] + H2O + H(+). It carries out the reaction 11-hydroxycucurbitadienol + reduced [NADPH--hemoprotein reductase] + O2 = 11-oxocucurbitadienol + oxidized [NADPH--hemoprotein reductase] + 2 H2O + H(+). The enzyme catalyses (24R)-24,25-dihydroxycucurbitadienol + reduced [NADPH--hemoprotein reductase] + O2 = mogrol + oxidized [NADPH--hemoprotein reductase] + H2O + H(+). Its pathway is secondary metabolite biosynthesis; terpenoid biosynthesis. Functionally, hydroxylase involved in the biosynthesis of cucurbitacin and mogroside tetracyclic triterpene natural products (e.g. siamenoside I and mogrosides IV, V and VI). Cucurbitacins have cytotoxic properties and exhibit deterrent taste as a defense barrier against herbivores. Mogrosides are nonsugar highly oxygenated compounds used as high-intensity zero-calorie sweeteners; they also possess pharmacological properties such as regulating immunity, lowering blood sugar and lipid levels, protecting the liver, and acting as antioxidants and antitumor agents. Catalyzes the oxidation of cucurbitadienol at the C-11 position to produce 11-oxocucurbitadienol, a possible biosynthetic intermediate from cucurbitadienol to mogrol. Also mediates the conversion of 24,25-dihydroxycucurbitadienol to mogrol. In Siraitia grosvenorii (Monk's fruit), this protein is Cucurbitadienol 11-hydroxylase.